A 246-amino-acid chain; its full sequence is 1-(5-phosphoribosyl)-5-[(5-phosphoribosylamino)methylideneamino] imidazole-4-carboxamide isomerase (246 aa).

Asp-8 serves as the catalytic Proton acceptor. Asp-131 acts as the Proton donor in catalysis.

This sequence belongs to the HisA/HisF family.

It localises to the cytoplasm. It carries out the reaction 1-(5-phospho-beta-D-ribosyl)-5-[(5-phospho-beta-D-ribosylamino)methylideneamino]imidazole-4-carboxamide = 5-[(5-phospho-1-deoxy-D-ribulos-1-ylimino)methylamino]-1-(5-phospho-beta-D-ribosyl)imidazole-4-carboxamide. The protein operates within amino-acid biosynthesis; L-histidine biosynthesis; L-histidine from 5-phospho-alpha-D-ribose 1-diphosphate: step 4/9. This Chromobacterium violaceum (strain ATCC 12472 / DSM 30191 / JCM 1249 / CCUG 213 / NBRC 12614 / NCIMB 9131 / NCTC 9757 / MK) protein is 1-(5-phosphoribosyl)-5-[(5-phosphoribosylamino)methylideneamino] imidazole-4-carboxamide isomerase.